A 96-amino-acid chain; its full sequence is Aspartyl/glutamyl-tRNA(Asn/Gln) amidotransferase subunit C (96 aa).

Belongs to the GatC family. As to quaternary structure, heterotrimer of A, B and C subunits.

The catalysed reaction is L-glutamyl-tRNA(Gln) + L-glutamine + ATP + H2O = L-glutaminyl-tRNA(Gln) + L-glutamate + ADP + phosphate + H(+). The enzyme catalyses L-aspartyl-tRNA(Asn) + L-glutamine + ATP + H2O = L-asparaginyl-tRNA(Asn) + L-glutamate + ADP + phosphate + 2 H(+). Its function is as follows. Allows the formation of correctly charged Asn-tRNA(Asn) or Gln-tRNA(Gln) through the transamidation of misacylated Asp-tRNA(Asn) or Glu-tRNA(Gln) in organisms which lack either or both of asparaginyl-tRNA or glutaminyl-tRNA synthetases. The reaction takes place in the presence of glutamine and ATP through an activated phospho-Asp-tRNA(Asn) or phospho-Glu-tRNA(Gln). The sequence is that of Aspartyl/glutamyl-tRNA(Asn/Gln) amidotransferase subunit C from Leptospira interrogans serogroup Icterohaemorrhagiae serovar copenhageni (strain Fiocruz L1-130).